Reading from the N-terminus, the 242-residue chain is MSMLCYTLIIAFLIGIWAAPKSEDNVPLGSPATPDLSDTSCAQTHKALKTSRNTDQRHPAPKKAEDQELGSAANIIVDPKLFQKRRFQSPRVLFSTQPPPLSRDEQSVEFLENEDALNRNIRSKRENHPVNDHGEYSVCDSVSVWVNKTTATDIKGKPVTVMVDVNLNNHVYKQYFFETKCKNPNPVPSGCRGIDSRHWNSYCTTTQSFVKALTKEGNQASWRFIRIDTACVCVISRKTGNF.

The N-terminal stretch at 1-18 (MSMLCYTLIIAFLIGIWA) is a signal peptide. Positions 19–125 (APKSEDNVPL…ALNRNIRSKR (107 aa)) are excised as a propeptide. The segment at 46–69 (KALKTSRNTDQRHPAPKKAEDQEL) is disordered. The segment covering 52–66 (RNTDQRHPAPKKAED) has biased composition (basic and acidic residues). Disulfide bonds link Cys-139–Cys-203, Cys-181–Cys-231, and Cys-191–Cys-233. Asn-147 carries an N-linked (GlcNAc...) asparagine glycan.

Belongs to the NGF-beta family. In terms of assembly, homodimer; non-covalently linked. In terms of tissue distribution, expressed by the venom gland.

The protein localises to the secreted. Functionally, nerve growth factor is important for the development and maintenance of the sympathetic and sensory nervous systems. It stimulates division and differentiation of sympathetic and embryonic sensory neurons as well as basal forebrain cholinergic neurons in the brain. Its relevance in the snake venom is not clear. However, it has been shown to inhibit metalloproteinase-dependent proteolysis of platelet glycoprotein Ib alpha, suggesting a metalloproteinase inhibition to prevent metalloprotease autodigestion and/or protection against prey proteases. Binds a lipid between the two protein chains in the homodimer. The lipid-bound form promotes histamine relase from mouse mast cells, contrary to the lipid-free form. This chain is Venom nerve growth factor 2, found in Demansia vestigiata (Lesser black whip snake).